A 377-amino-acid chain; its full sequence is Anhydro-N-acetylmuramic acid kinase (377 aa).

18 to 25 (GTSADGID) contacts ATP.

It belongs to the anhydro-N-acetylmuramic acid kinase family.

The enzyme catalyses 1,6-anhydro-N-acetyl-beta-muramate + ATP + H2O = N-acetyl-D-muramate 6-phosphate + ADP + H(+). It participates in amino-sugar metabolism; 1,6-anhydro-N-acetylmuramate degradation. It functions in the pathway cell wall biogenesis; peptidoglycan recycling. Catalyzes the specific phosphorylation of 1,6-anhydro-N-acetylmuramic acid (anhMurNAc) with the simultaneous cleavage of the 1,6-anhydro ring, generating MurNAc-6-P. Is required for the utilization of anhMurNAc either imported from the medium or derived from its own cell wall murein, and thus plays a role in cell wall recycling. The chain is Anhydro-N-acetylmuramic acid kinase from Xanthomonas oryzae pv. oryzae (strain MAFF 311018).